The chain runs to 156 residues: Small ribosomal subunit protein uS7 (156 aa).

This sequence belongs to the universal ribosomal protein uS7 family. Part of the 30S ribosomal subunit. Contacts proteins S9 and S11.

One of the primary rRNA binding proteins, it binds directly to 16S rRNA where it nucleates assembly of the head domain of the 30S subunit. Is located at the subunit interface close to the decoding center, probably blocks exit of the E-site tRNA. The chain is Small ribosomal subunit protein uS7 from Thermoanaerobacter sp. (strain X514).